A 264-amino-acid chain; its full sequence is Apolipoprotein A-I (264 aa).

The N-terminal stretch at 1–18 is a signal peptide; the sequence is MRGVLVTLAVLFLTGTQA. 2 tandem repeats follow at residues 67 to 88 and 89 to 110. Residues 67–264 form a 10 X approximate tandem repeats region; that stretch reads LKLADNLDTL…LLDEVQKTMA (198 aa). The stretch at 111 to 121 is one 3; half-length repeat; that stretch reads KDLEEVKEKIR. 5 tandem repeats follow at residues 122–143, 144–165, 166–187, 188–209, and 210–231. The stretch at 232-242 is one 9; half-length repeat; it reads PLVQEFKERLT. Copy 10 of the repeat occupies 243–264; it reads PYAENLKNRLIDLLDEVQKTMA.

Belongs to the apolipoprotein A1/A4/E family. Major protein of VLDL, HDL, LDL and in chylomicrons. Expressed in a number of tissues including liver, small intestine, lung, kidney, heart and muscle with highest expression in liver and small intestine.

It is found in the secreted. Functionally, participates in the reverse transport of cholesterol from tissues to the liver for excretion by promoting cholesterol efflux from tissues and by acting as a cofactor for the lecithin cholesterol acyltransferase (LCAT). The protein is Apolipoprotein A-I (APOA1) of Coturnix japonica (Japanese quail).